Reading from the N-terminus, the 197-residue chain is Nascent polypeptide-associated complex subunit alpha (197 aa).

Residues 1 to 18 (MTGSTETRHNEKDVKEPQ) show a composition bias toward basic and acidic residues. Positions 1–30 (MTGSTETRHNEKDVKEPQVDSDADSDNEAI) are disordered. The span at 19–28 (VDSDADSDNE) shows a compositional bias: acidic residues. The NAC-A/B domain occupies 58 to 123 (SRSEKKARKL…AKIEDLTQHA (66 aa)). Residues 134–155 (TREAPQLKTVEEDDNEDVEEDS) are disordered. Acidic residues predominate over residues 144–155 (EEDDNEDVEEDS). In terms of domain architecture, UBA spans 158–195 (IEEKDIELVISQANTTRNKAIRALKDADNDIVNAIMSL).

This sequence belongs to the NAC-alpha family.

May promote appropriate targeting of ribosome-nascent polypeptide complexes. This is Nascent polypeptide-associated complex subunit alpha from Caenorhabditis briggsae.